Reading from the N-terminus, the 659-residue chain is UvrABC system protein B (659 aa).

A Helicase ATP-binding domain is found at 25 to 412 (QSIENGNRGQ…SEIVAEQIIR (388 aa)). ATP is bound at residue 38 to 45 (GVTGSGKT). The Beta-hairpin motif lies at 91–114 (YYDYYQPEAYVPQTDTFIEKDASI). One can recognise a Helicase C-terminal domain in the interval 429-582 (QIDDLYGEIQ…QMEYNEEHNI (154 aa)). One can recognise a UVR domain in the interval 622–657 (EKLIEQYEEEMKEAAKNLQFERAAELRDIIKDLKEN).

Belongs to the UvrB family. Forms a heterotetramer with UvrA during the search for lesions. Interacts with UvrC in an incision complex.

It is found in the cytoplasm. Functionally, the UvrABC repair system catalyzes the recognition and processing of DNA lesions. A damage recognition complex composed of 2 UvrA and 2 UvrB subunits scans DNA for abnormalities. Upon binding of the UvrA(2)B(2) complex to a putative damaged site, the DNA wraps around one UvrB monomer. DNA wrap is dependent on ATP binding by UvrB and probably causes local melting of the DNA helix, facilitating insertion of UvrB beta-hairpin between the DNA strands. Then UvrB probes one DNA strand for the presence of a lesion. If a lesion is found the UvrA subunits dissociate and the UvrB-DNA preincision complex is formed. This complex is subsequently bound by UvrC and the second UvrB is released. If no lesion is found, the DNA wraps around the other UvrB subunit that will check the other stand for damage. The polypeptide is UvrABC system protein B (Clostridium perfringens (strain 13 / Type A)).